A 386-amino-acid chain; its full sequence is Methionine aminopeptidase 1 (386 aa).

The segment at 6-59 adopts a C6H2-type zinc-finger fold; sequence TRECETEGCHSEAKLQCPTCIKLGIQGSYFCSQECFKGSWATHKLLHKKAKEDK. 8 residues coordinate Zn(2+): cysteine 9, cysteine 14, cysteine 22, cysteine 25, cysteine 36, cysteine 40, histidine 48, and histidine 52. Residue histidine 202 coordinates a protein. Zn(2+)-binding residues include aspartate 219, aspartate 230, and histidine 293. Position 300 (histidine 300) interacts with a protein. Residues glutamate 326 and glutamate 357 each contribute to the Zn(2+) site.

The protein belongs to the peptidase M24A family. Methionine aminopeptidase type 1 subfamily. In terms of assembly, associates with the 60S ribosomal subunit of the 80S translational complex. It depends on Zn(2+) as a cofactor. Co(2+) serves as cofactor. Requires Mn(2+) as cofactor. The cofactor is Fe(2+).

It localises to the cytoplasm. The catalysed reaction is Release of N-terminal amino acids, preferentially methionine, from peptides and arylamides.. Its function is as follows. Cotranslationally removes the N-terminal methionine from nascent proteins. The N-terminal methionine is often cleaved when the second residue in the primary sequence is small and uncharged (Met-Ala-, Cys, Gly, Pro, Ser, Thr, or Val). The sequence is that of Methionine aminopeptidase 1 (metap1) from Danio rerio (Zebrafish).